A 398-amino-acid chain; its full sequence is 1-deoxy-D-xylulose 5-phosphate reductoisomerase (398 aa).

Residues Thr10, Gly11, Ser12, Ile13, Gly36, Arg37, Asn38, and Asn124 each coordinate NADPH. Lys125 serves as a coordination point for 1-deoxy-D-xylulose 5-phosphate. Residue Glu126 participates in NADPH binding. Residue Asp150 coordinates Mn(2+). Residues Ser151, Glu152, Ser186, and His209 each contribute to the 1-deoxy-D-xylulose 5-phosphate site. Glu152 serves as a coordination point for Mn(2+). Position 215 (Gly215) interacts with NADPH. Ser222, Asn227, Lys228, and Glu231 together coordinate 1-deoxy-D-xylulose 5-phosphate. Residue Glu231 participates in Mn(2+) binding.

This sequence belongs to the DXR family. Homodimer. The cofactor is Mg(2+). Requires Mn(2+) as cofactor.

It carries out the reaction 2-C-methyl-D-erythritol 4-phosphate + NADP(+) = 1-deoxy-D-xylulose 5-phosphate + NADPH + H(+). It participates in isoprenoid biosynthesis; isopentenyl diphosphate biosynthesis via DXP pathway; isopentenyl diphosphate from 1-deoxy-D-xylulose 5-phosphate: step 1/6. Its function is as follows. Catalyzes the NADPH-dependent rearrangement and reduction of 1-deoxy-D-xylulose-5-phosphate (DXP) to 2-C-methyl-D-erythritol 4-phosphate (MEP). This chain is 1-deoxy-D-xylulose 5-phosphate reductoisomerase, found in Yersinia pseudotuberculosis serotype IB (strain PB1/+).